The chain runs to 436 residues: Protein Z-dependent protease inhibitor (436 aa).

Positions 1-20 (MRVVSSLFLPVLLAEVWLVS) are cleaved as a signal peptide. Residues asparagine 23, asparagine 42, and asparagine 69 are each glycosylated (N-linked (GlcNAc...) asparagine). Residues 128 to 145 (AGPLILPALFKRVKETFS) form a heparin-binding region. N-linked (GlcNAc...) asparagine glycans are attached at residues asparagine 172, asparagine 189, and asparagine 287.

It belongs to the serpin family. In terms of processing, phosphorylated by FAM20C in the extracellular medium. Expressed by the liver and secreted in plasma.

The protein localises to the secreted. Inhibits activity of the coagulation protease factor Xa in the presence of PROZ, calcium and phospholipids. Also inhibits factor XIa in the absence of cofactors. The chain is Protein Z-dependent protease inhibitor (Serpina10) from Rattus norvegicus (Rat).